The chain runs to 507 residues: Variant surface glycoprotein ILTAT 1.25 (507 aa).

Residues 1-21 form the signal peptide; sequence MQSQQQPVFISIILLAINTDA. The segment covering 83–95 has biased composition (basic and acidic residues); that stretch reads EPEAAPKESRSDE. The interval 83-102 is disordered; that stretch reads EPEAAPKESRSDETPEACKA. N-linked (GlcNAc...) asparagine glycans are attached at residues N141 and N371. Residues 384 to 395 are compositionally biased toward low complexity; it reads PTKQPPAKAAAA. Residues 384–474 are disordered; sequence PTKQPPAKAA…KKEEECKSPN (91 aa). A compositionally biased stretch (basic and acidic residues) spans 396-420; it reads PEKKSNPQKDCNKNTKKRDCKEGDG. Residues 444-455 show a composition bias toward low complexity; that stretch reads SAAGAGDAGASD. The segment covering 456-474 has biased composition (basic and acidic residues); the sequence is TEAKKCSDKKKEEECKSPN. A lipid anchor (GPI-anchor amidated aspartate) is attached at D484. Positions 485–507 are cleaved as a propeptide — removed in mature form; the sequence is SSILANKQFALSVASAAFVALLF.

The protein resides in the cell membrane. In terms of biological role, VSG forms a coat on the surface of the parasite. The trypanosome evades the immune response of the host by expressing a series of antigenically distinct VSGs from an estimated 1000 VSG genes. This is Variant surface glycoprotein ILTAT 1.25 from Trypanosoma brucei brucei.